We begin with the raw amino-acid sequence, 554 residues long: CTP synthase (554 aa).

Residues 1 to 279 (MSQPRAEHVT…DAFLIRRLDL (279 aa)) are amidoligase domain. Serine 21 contacts CTP. A UTP-binding site is contributed by serine 21. ATP-binding positions include 22 to 27 (SLGKGL) and aspartate 79. Mg(2+) is bound by residues aspartate 79 and glutamate 153. CTP is bound by residues 160–162 (DIE), 200–205 (KTKPTQ), and lysine 236. UTP-binding positions include 200-205 (KTKPTQ) and lysine 236. The Glutamine amidotransferase type-1 domain maps to 304–551 (TVALVGKYID…VKAGLKHKND (248 aa)). Glycine 367 lines the L-glutamine pocket. Cysteine 394 serves as the catalytic Nucleophile; for glutamine hydrolysis. L-glutamine-binding positions include 395–398 (LGLQ), glutamate 417, and arginine 478. Catalysis depends on residues histidine 524 and glutamate 526.

This sequence belongs to the CTP synthase family. As to quaternary structure, homotetramer.

It catalyses the reaction UTP + L-glutamine + ATP + H2O = CTP + L-glutamate + ADP + phosphate + 2 H(+). The catalysed reaction is L-glutamine + H2O = L-glutamate + NH4(+). It carries out the reaction UTP + NH4(+) + ATP = CTP + ADP + phosphate + 2 H(+). It participates in pyrimidine metabolism; CTP biosynthesis via de novo pathway; CTP from UDP: step 2/2. Its activity is regulated as follows. Allosterically activated by GTP, when glutamine is the substrate; GTP has no effect on the reaction when ammonia is the substrate. The allosteric effector GTP functions by stabilizing the protein conformation that binds the tetrahedral intermediate(s) formed during glutamine hydrolysis. Inhibited by the product CTP, via allosteric rather than competitive inhibition. Its function is as follows. Catalyzes the ATP-dependent amination of UTP to CTP with either L-glutamine or ammonia as the source of nitrogen. Regulates intracellular CTP levels through interactions with the four ribonucleotide triphosphates. The sequence is that of CTP synthase from Corynebacterium kroppenstedtii (strain DSM 44385 / JCM 11950 / CIP 105744 / CCUG 35717).